We begin with the raw amino-acid sequence, 168 residues long: Ribosome maturation factor RimP (168 aa).

It belongs to the RimP family.

Its subcellular location is the cytoplasm. In terms of biological role, required for maturation of 30S ribosomal subunits. The protein is Ribosome maturation factor RimP of Rickettsia bellii (strain OSU 85-389).